Reading from the N-terminus, the 547-residue chain is MAAKDVKFSGDARDRMLRGVDILANAVKVTLGPKGRNVVIEKSFGAPRITKDGVTVAKEIELEDKFENMGAQMLREVASKTNDLAGDGTTTATVLAQAIVREGAKAVAAGMNPMDLKRGIDTAVAAVIKDIEKRAKPVASSAEVAQVGTISANGDAAIGKMIAQAMQKVGNEGVITVEENKSLETEVDIVEGMKFDRGYLSPYFVTNAEKMTAELDDVYVLLHEKKLSGLQAMLPVLEAVVQSGRPLLIIAEDVEGEALATLVVNRLRGGLKVAAVKAPGFGDRRKAMLEDIAILTGGQLISDDLGMKLENVTIKMLGRAKKVVIDKENTTIVNGAGKKADIEARVGQIKAQIEETTSDYDREKLQERLAKLAGGVAVIRVGGATEVEVKEKKDRVEDALNATRAAVQEGIVPGGGVALLRAKKAVGRITNPNSDVQAGINIVLKALEAPMRQIAENAGVEGSIVVGKILEEKSETFGFDAQTEDYVDMVAKGIIDPAKVVRTALQDASSVAGLLVTTEAMVAELPKDAAPAMPAGGGMGGMGGMGF.

ATP contacts are provided by residues 30–33 (TLGP), lysine 51, 87–91 (DGTTT), glycine 415, and aspartate 496.

This sequence belongs to the chaperonin (HSP60) family. In terms of assembly, forms a cylinder of 14 subunits composed of two heptameric rings stacked back-to-back. Interacts with the co-chaperonin GroES.

It localises to the cytoplasm. It catalyses the reaction ATP + H2O + a folded polypeptide = ADP + phosphate + an unfolded polypeptide.. Together with its co-chaperonin GroES, plays an essential role in assisting protein folding. The GroEL-GroES system forms a nano-cage that allows encapsulation of the non-native substrate proteins and provides a physical environment optimized to promote and accelerate protein folding. The protein is Chaperonin GroEL 3 of Bradyrhizobium sp. (strain ORS 278).